Reading from the N-terminus, the 146-residue chain is Hemoglobin subunit beta-1 (146 aa).

Positions 2-146 (HWTAEEKSAI…VAHALAHRYH (145 aa)) constitute a Globin domain. Residues H63 and H92 each coordinate heme b.

Belongs to the globin family. In terms of assembly, heterotetramer of two alpha chains and two beta chains. Red blood cells.

Its function is as follows. Involved in oxygen transport from the lung to the various peripheral tissues. In Drymarchon melanurus erebennus (Texas indigo snake), this protein is Hemoglobin subunit beta-1.